The primary structure comprises 331 residues: MKWLVGLLPLCSYAVAQVHKDPTLDHHWNLWKKTYSKQYKEENEEVARRLIWEKNLKFVMLHNLEHSMGMHSYDLGMNHLGDMTGEEVISLMGSLRVPSQWQRNVTYRSNSNQKLPDSVDWREKGCVTEVKYQGSCGACWAFSAVGALEAQLKLKTGKLVSLSAQNLVDCSTEKYGNKGCNGGFMTTAFQYIIDNNGIDSEASYPYKAMNGKCRYDSKKRAATCSKYTELPFGSEDALKEAVANKGPVSVAIDASHYSFFLYRSGVYYEPSCTQNVNHGVLVVGYGNLNGKDYWLVKNSWGLNFGDQGYIRMARNSGNHCGIASYPSYPEI.

Positions 1 to 16 are cleaved as a signal peptide; the sequence is MKWLVGLLPLCSYAVA. Residues 17-114 constitute a propeptide, activation peptide; it reads QVHKDPTLDH…VTYRSNSNQK (98 aa). N-linked (GlcNAc...) asparagine glycosylation occurs at asparagine 104. Disulfide bonds link cysteine 126–cysteine 224, cysteine 136–cysteine 180, cysteine 170–cysteine 213, and cysteine 272–cysteine 320. Residue cysteine 139 is part of the active site. Catalysis depends on residues histidine 278 and asparagine 298.

The protein belongs to the peptidase C1 family.

It is found in the lysosome. It localises to the secreted. Its subcellular location is the cytoplasmic vesicle. The protein localises to the phagosome. It carries out the reaction Similar to cathepsin L, but with much less activity on Z-Phe-Arg-|-NHMec, and more activity on the Z-Val-Val-Arg-|-Xaa compound.. Functionally, thiol protease. Key protease responsible for the removal of the invariant chain from MHC class II molecules and MHC class II antigen presentation. The bond-specificity of this proteinase is in part similar to the specificities of cathepsin L. The polypeptide is Cathepsin S (CTSS) (Canis lupus familiaris (Dog)).